The sequence spans 1175 residues: Structural maintenance of chromosomes protein 2-1 (1175 aa).

Positions 2–1161 (HIKEICLEGF…NVLFRTKFVD (1160 aa)) constitute a Zinc-hook domain. 32–39 (GLNGSGKS) lines the ATP pocket. Positions 172-508 (RMYENKKEAA…AQLANFQFTY (337 aa)) form a coiled coil. The SMC hinge domain maps to 518 to 638 (SKVKGVVAKL…KTTDVAKEVA (121 aa)). Positions 673–1028 (LRKLHDLAEA…ELDEKKKETL (356 aa)) form a coiled coil.

This sequence belongs to the SMC family. SMC2 subfamily. As to quaternary structure, forms a heterodimer with SMC4. Component of the condensin complex, which contains the SMC2 and SMC4 heterodimer, and three non SMC subunits that probably regulate the complex: CAPH, CAPD2 and CAPG. Highly expressed in roots and young floral buds.

The protein localises to the nucleus. In terms of biological role, central component of the condensin complex, a complex required for conversion of interphase chromatin into mitotic-like condense chromosomes. The condensin complex probably introduces positive supercoils into relaxed DNA in the presence of type I topoisomerases and converts nicked DNA into positive knotted forms in the presence of type II topoisomerases. Also involved in chromosome segregation in meiosis. The sequence is that of Structural maintenance of chromosomes protein 2-1 (SMC2-1) from Arabidopsis thaliana (Mouse-ear cress).